The chain runs to 173 residues: MADTARGTHHDIIGRDQYPMMGRDRDQYQMSGRGSDYSKSRQIAKAATAVTAGGSLLVLSSLTLVGTVIALTVATPLLVIFSPILVPALITVALLITGFLSSGGFGIAAITVFSWIYKYATGEHPQGSDKLDSARMKLGSKAQDLKDRAQYYGQQHTGGEHDRDRTRGGQHTT.

Positions 1–45 are polar; that stretch reads MADTARGTHHDIIGRDQYPMMGRDRDQYQMSGRGSDYSKSRQIAK. Residues 46–117 are hydrophobic; sequence AATAVTAGGS…AAITVFSWIY (72 aa). The next 3 membrane-spanning stretches (helical) occupy residues 54–74, 76–96, and 97–117; these read GSLL…LTVA, PLLV…ALLI, and TGFL…SWIY. A disordered region spans residues 151 to 173; sequence YYGQQHTGGEHDRDRTRGGQHTT. Residues 158–167 show a composition bias toward basic and acidic residues; sequence GGEHDRDRTR.

Belongs to the oleosin family.

The protein resides in the lipid droplet. It is found in the membrane. In terms of biological role, may have a structural role to stabilize the lipid body during desiccation of the seed by preventing coalescence of the oil. Probably interacts with both lipid and phospholipid moieties of lipid bodies. May also provide recognition signals for specific lipase anchorage in lipolysis during seedling growth. The protein is Oleosin 18.5 kDa of Arabidopsis thaliana (Mouse-ear cress).